The chain runs to 215 residues: Ribonuclease S-6 (215 aa).

Residues 1–22 (MFNLPLTSVFVIFLFALSPIYG) form the signal peptide. Residue Q32 participates in RNA binding. C38 and C43 are oxidised to a cystine. N49 carries N-linked (GlcNAc...) asparagine glycosylation. H53 lines the RNA pocket. H53 acts as the Proton donor in catalysis. Residue N59 is glycosylated (N-linked (GlcNAc...) asparagine). A disulfide bridge connects residues C67 and C116. Residues 91–92 (DL), R94, F105, 108–109 (RE), and 112–113 (KH) each bind RNA. E109 is an active-site residue. H113 (proton acceptor) is an active-site residue. N-linked (GlcNAc...) asparagine glycans are attached at residues N160 and N172. Cystine bridges form between C175/C204 and C187/C198.

The protein belongs to the RNase T2 family.

It localises to the secreted. The protein localises to the extracellular space. It carries out the reaction a ribonucleotidyl-ribonucleotide-RNA + H2O = a 3'-end 3'-phospho-ribonucleotide-RNA + a 5'-end dephospho-ribonucleoside-RNA + H(+). Its function is as follows. Self-incompatibility (SI) is the inherited ability of a flowering plant to prevent self-fertilization by discriminating between self and non-self pollen during pollination. In many species of the Solanaceae, self-incompatibility is controlled by the single, multiallelic locus S. This stylar glycoprotein is associated with expression of self-incompatibility in potato. The polypeptide is Ribonuclease S-6 (Nicotiana alata (Winged tobacco)).